Reading from the N-terminus, the 424-residue chain is Serine hydroxymethyltransferase 2 (424 aa).

(6S)-5,6,7,8-tetrahydrofolate is bound by residues Leu-125 and 129-131 (GHL). Lys-234 carries the N6-(pyridoxal phosphate)lysine modification. Residue Glu-250 participates in (6S)-5,6,7,8-tetrahydrofolate binding.

This sequence belongs to the SHMT family. As to quaternary structure, homodimer. Pyridoxal 5'-phosphate serves as cofactor.

It localises to the cytoplasm. It catalyses the reaction (6R)-5,10-methylene-5,6,7,8-tetrahydrofolate + glycine + H2O = (6S)-5,6,7,8-tetrahydrofolate + L-serine. It functions in the pathway one-carbon metabolism; tetrahydrofolate interconversion. The protein operates within amino-acid biosynthesis; glycine biosynthesis; glycine from L-serine: step 1/1. Functionally, catalyzes the reversible interconversion of serine and glycine with tetrahydrofolate (THF) serving as the one-carbon carrier. This reaction serves as the major source of one-carbon groups required for the biosynthesis of purines, thymidylate, methionine, and other important biomolecules. Also exhibits THF-independent aldolase activity toward beta-hydroxyamino acids, producing glycine and aldehydes, via a retro-aldol mechanism. The sequence is that of Serine hydroxymethyltransferase 2 from Burkholderia pseudomallei (strain 1710b).